A 117-amino-acid chain; its full sequence is Large ribosomal subunit protein bL20 (117 aa).

This sequence belongs to the bacterial ribosomal protein bL20 family.

Binds directly to 23S ribosomal RNA and is necessary for the in vitro assembly process of the 50S ribosomal subunit. It is not involved in the protein synthesizing functions of that subunit. The polypeptide is Large ribosomal subunit protein bL20 (Neorickettsia sennetsu (strain ATCC VR-367 / Miyayama) (Ehrlichia sennetsu)).